The chain runs to 500 residues: Aldehyde dehydrogenase (500 aa).

Residue 246–251 participates in NAD(+) binding; it reads GSTLVG. E269 functions as the Proton acceptor in the catalytic mechanism. Catalysis depends on C303, which acts as the Nucleophile.

It belongs to the aldehyde dehydrogenase family.

It carries out the reaction an aldehyde + NAD(+) + H2O = a carboxylate + NADH + 2 H(+). It functions in the pathway alcohol metabolism; ethanol degradation; acetate from ethanol: step 2/2. This Agaricus bisporus (White button mushroom) protein is Aldehyde dehydrogenase (aldA).